We begin with the raw amino-acid sequence, 141 residues long: Hemoglobin subunit zeta (141 aa).

N-acetylserine is present on Ser1. A Globin domain is found at 1 to 141; it reads SLTKAERTII…VSGVLTEKYR (141 aa). Residue Thr28 is modified to Phosphothreonine. Phosphoserine is present on Ser52. His58 serves as a coordination point for heme b. A Phosphoserine modification is found at Ser72. His87 serves as a coordination point for heme b.

This sequence belongs to the globin family. Heterotetramer of two zeta chains and two epsilon chains.

The zeta chain is an alpha-type chain of mammalian embryonic hemoglobin. The chain is Hemoglobin subunit zeta from Sus scrofa (Pig).